A 161-amino-acid polypeptide reads, in one-letter code: Cyclic pyranopterin monophosphate synthase (161 aa).

Residues 75-77 and 115-116 each bind substrate; these read MCH and ME. D130 is a catalytic residue.

It belongs to the MoaC family. As to quaternary structure, homohexamer; trimer of dimers.

The catalysed reaction is (8S)-3',8-cyclo-7,8-dihydroguanosine 5'-triphosphate = cyclic pyranopterin phosphate + diphosphate. It functions in the pathway cofactor biosynthesis; molybdopterin biosynthesis. Catalyzes the conversion of (8S)-3',8-cyclo-7,8-dihydroguanosine 5'-triphosphate to cyclic pyranopterin monophosphate (cPMP). The polypeptide is Cyclic pyranopterin monophosphate synthase (Bacillus cereus (strain ATCC 10987 / NRS 248)).